The chain runs to 408 residues: 4-hydroxy-3-methylbut-2-en-1-yl diphosphate synthase (ferredoxin) (408 aa).

Residues 1 to 21 (MQTLPTPTTSSNTANQSTFDT) are compositionally biased toward polar residues. The segment at 1–26 (MQTLPTPTTSSNTANQSTFDTTIKRR) is disordered. Residues Cys317, Cys320, Cys351, and Glu358 each coordinate [4Fe-4S] cluster.

This sequence belongs to the IspG family. [4Fe-4S] cluster serves as cofactor.

It carries out the reaction (2E)-4-hydroxy-3-methylbut-2-enyl diphosphate + 2 oxidized [2Fe-2S]-[ferredoxin] + H2O = 2-C-methyl-D-erythritol 2,4-cyclic diphosphate + 2 reduced [2Fe-2S]-[ferredoxin] + H(+). It functions in the pathway isoprenoid biosynthesis; isopentenyl diphosphate biosynthesis via DXP pathway; isopentenyl diphosphate from 1-deoxy-D-xylulose 5-phosphate: step 5/6. Its function is as follows. Converts 2C-methyl-D-erythritol 2,4-cyclodiphosphate (ME-2,4cPP) into 1-hydroxy-2-methyl-2-(E)-butenyl 4-diphosphate. This Trichormus variabilis (strain ATCC 29413 / PCC 7937) (Anabaena variabilis) protein is 4-hydroxy-3-methylbut-2-en-1-yl diphosphate synthase (ferredoxin).